A 79-amino-acid polypeptide reads, in one-letter code: Dolichyl-diphosphooligosaccharide--protein glycosyltransferase subunit TMEM258 (79 aa).

Transmembrane regions (helical) follow at residues 18 to 38 and 55 to 75; these read LPLL…AFTM and FIAA…LLWV.

Belongs to the OST5 family. In terms of assembly, component of the oligosaccharyltransferase (OST) complex.

It localises to the membrane. It participates in protein modification; protein glycosylation. Functionally, subunit of the oligosaccharyl transferase (OST) complex that catalyzes the initial transfer of a defined glycan (Glc(3)Man(9)GlcNAc(2) in eukaryotes) from the lipid carrier dolichol-pyrophosphate to an asparagine residue within an Asn-X-Ser/Thr consensus motif in nascent polypeptide chains, the first step in protein N-glycosylation. N-glycosylation occurs cotranslationally and the complex associates with the Sec61 complex at the channel-forming translocon complex that mediates protein translocation across the endoplasmic reticulum (ER). All subunits are required for a maximal enzyme activity. The sequence is that of Dolichyl-diphosphooligosaccharide--protein glycosyltransferase subunit TMEM258 from Caenorhabditis briggsae.